The following is a 184-amino-acid chain: ATP synthase subunit b, chloroplastic (184 aa).

Residues leucine 27 to leucine 49 form a helical membrane-spanning segment.

Belongs to the ATPase B chain family. In terms of assembly, F-type ATPases have 2 components, F(1) - the catalytic core - and F(0) - the membrane proton channel. F(1) has five subunits: alpha(3), beta(3), gamma(1), delta(1), epsilon(1). F(0) has four main subunits: a(1), b(1), b'(1) and c(10-14). The alpha and beta chains form an alternating ring which encloses part of the gamma chain. F(1) is attached to F(0) by a central stalk formed by the gamma and epsilon chains, while a peripheral stalk is formed by the delta, b and b' chains.

It is found in the plastid. Its subcellular location is the chloroplast thylakoid membrane. Its function is as follows. F(1)F(0) ATP synthase produces ATP from ADP in the presence of a proton or sodium gradient. F-type ATPases consist of two structural domains, F(1) containing the extramembraneous catalytic core and F(0) containing the membrane proton channel, linked together by a central stalk and a peripheral stalk. During catalysis, ATP synthesis in the catalytic domain of F(1) is coupled via a rotary mechanism of the central stalk subunits to proton translocation. Component of the F(0) channel, it forms part of the peripheral stalk, linking F(1) to F(0). The polypeptide is ATP synthase subunit b, chloroplastic (Citrus sinensis (Sweet orange)).